The chain runs to 402 residues: Xylose/arabinose-binding protein XylF (402 aa).

The helical transmembrane segment at 38–58 (GIIAGVLAAFGAGFGSGYVTA) threads the bilayer.

This sequence belongs to the bacterial solute-binding protein 2 family. In terms of assembly, the complex is composed of two ATP-binding proteins (XylG), two transmembrane proteins (XylH) and a solute-binding protein (XylF).

It is found in the cell membrane. In terms of biological role, part of the ABC transporter complex XylFGH involved in the uptake of xylose and arabinose. The protein is Xylose/arabinose-binding protein XylF of Sulfolobus acidocaldarius (strain ATCC 33909 / DSM 639 / JCM 8929 / NBRC 15157 / NCIMB 11770).